Consider the following 1073-residue polypeptide: Carbamoyl phosphate synthase large chain (1073 aa).

The tract at residues Met1 to Asp399 is carboxyphosphate synthetic domain. ATP-binding residues include Arg129, Arg169, Gly175, Gly176, Glu208, Val210, Glu215, Gly241, Val242, His243, Gln284, and Glu296. Residues Lys133–Ile325 form the ATP-grasp 1 domain. Residues Gln284, Glu296, and Asn298 each contribute to the Mg(2+) site. Residues Gln284, Glu296, and Asn298 each contribute to the Mn(2+) site. The oligomerization domain stretch occupies residues Ile400–Thr540. Residues Asn541–Leu931 are carbamoyl phosphate synthetic domain. The 192-residue stretch at Tyr672–Ala863 folds into the ATP-grasp 2 domain. ATP contacts are provided by Arg708, Asp747, Leu749, Glu754, Gly779, Val780, His781, Ser782, Gln822, and Glu834. The Mg(2+) site is built by Gln822, Glu834, and Asn836. 3 residues coordinate Mn(2+): Gln822, Glu834, and Asn836. The region spanning Asn930–Lys1071 is the MGS-like domain. Residues Leu932–Glu1073 form an allosteric domain region.

This sequence belongs to the CarB family. In terms of assembly, composed of two chains; the small (or glutamine) chain promotes the hydrolysis of glutamine to ammonia, which is used by the large (or ammonia) chain to synthesize carbamoyl phosphate. Tetramer of heterodimers (alpha,beta)4. It depends on Mg(2+) as a cofactor. Mn(2+) is required as a cofactor.

The catalysed reaction is hydrogencarbonate + L-glutamine + 2 ATP + H2O = carbamoyl phosphate + L-glutamate + 2 ADP + phosphate + 2 H(+). It catalyses the reaction hydrogencarbonate + NH4(+) + 2 ATP = carbamoyl phosphate + 2 ADP + phosphate + 2 H(+). The protein operates within amino-acid biosynthesis; L-arginine biosynthesis; carbamoyl phosphate from bicarbonate: step 1/1. It functions in the pathway pyrimidine metabolism; UMP biosynthesis via de novo pathway; (S)-dihydroorotate from bicarbonate: step 1/3. Large subunit of the glutamine-dependent carbamoyl phosphate synthetase (CPSase). CPSase catalyzes the formation of carbamoyl phosphate from the ammonia moiety of glutamine, carbonate, and phosphate donated by ATP, constituting the first step of 2 biosynthetic pathways, one leading to arginine and/or urea and the other to pyrimidine nucleotides. The large subunit (synthetase) binds the substrates ammonia (free or transferred from glutamine from the small subunit), hydrogencarbonate and ATP and carries out an ATP-coupled ligase reaction, activating hydrogencarbonate by forming carboxy phosphate which reacts with ammonia to form carbamoyl phosphate. This is Carbamoyl phosphate synthase large chain from Methanosarcina mazei (strain ATCC BAA-159 / DSM 3647 / Goe1 / Go1 / JCM 11833 / OCM 88) (Methanosarcina frisia).